The sequence spans 139 residues: Protein shisa-5 (139 aa).

The helical transmembrane segment at 3 to 23 (FGTLVAIGVIVFAVVVITIIL) threads the bilayer.

The protein belongs to the shisa family.

Its subcellular location is the endoplasmic reticulum membrane. It localises to the nucleus membrane. Functionally, can induce apoptosis in a caspase-dependent manner and plays a role in p53/TP53-dependent apoptosis. This is Protein shisa-5 (Shisa5) from Gallus gallus (Chicken).